The primary structure comprises 188 residues: Inosine triphosphate pyrophosphatase (188 aa).

An ITP-binding site is contributed by 9 to 14 (TGNAKK). Glu-39 contacts Mg(2+). ITP-binding positions include Lys-51, 67 to 68 (DT), Lys-84, 143 to 146 (FGWD), Lys-166, and 171 to 172 (HR).

This sequence belongs to the HAM1 NTPase family. Homodimer. The cofactor is Mg(2+). It depends on Mn(2+) as a cofactor.

It is found in the cytoplasm. It catalyses the reaction ITP + H2O = IMP + diphosphate + H(+). It carries out the reaction dITP + H2O = dIMP + diphosphate + H(+). The catalysed reaction is XTP + H2O = XMP + diphosphate + H(+). In terms of biological role, pyrophosphatase that hydrolyzes non-canonical purine nucleotides such as inosine triphosphate (ITP), deoxyinosine triphosphate (dITP) or xanthosine 5'-triphosphate (XTP) to their respective monophosphate derivatives. The enzyme does not distinguish between the deoxy- and ribose forms. Probably excludes non-canonical purines from RNA and DNA precursor pools, thus preventing their incorporation into RNA and DNA and avoiding chromosomal lesions. In Aedes aegypti (Yellowfever mosquito), this protein is Inosine triphosphate pyrophosphatase.